A 465-amino-acid polypeptide reads, in one-letter code: Cysteine--tRNA ligase (465 aa).

Cys-27 is a Zn(2+) binding site. The short motif at 29 to 39 (PTVYNFFHIGN) is the 'HIGH' region element. Positions 207, 232, and 236 each coordinate Zn(2+). Residues 264–268 (KMSKS) carry the 'KMSKS' region motif. Lys-267 contributes to the ATP binding site.

The protein belongs to the class-I aminoacyl-tRNA synthetase family. In terms of assembly, monomer. Zn(2+) is required as a cofactor.

It is found in the cytoplasm. The enzyme catalyses tRNA(Cys) + L-cysteine + ATP = L-cysteinyl-tRNA(Cys) + AMP + diphosphate. This Clostridium botulinum (strain 657 / Type Ba4) protein is Cysteine--tRNA ligase.